A 786-amino-acid chain; its full sequence is Receptor-like protein 30 (786 aa).

A signal peptide spans 1–30 (MIPSQSNSFSGSVITLYFFLLGSLVLRTLA). Residues 31 to 739 (SSRLHYCRHD…SEPEEQVINW (709 aa)) are Extracellular-facing. N-linked (GlcNAc...) asparagine glycans are attached at residues N67, N98, N115, and N133. 4 LRR repeats span residues 110–133 (LQQLQNLTLSDCHLYGEVTSSLGN), 134–158 (LSRLTHLDLSSNQLTGEVLASVSKL), 159–181 (NQLRDLLLSENSFSGNIPTSFTN), and 183–204 (TKLSSLDISSNQFTLENFSFIL). N-linked (GlcNAc...) asparagine glycosylation is found at N181, N199, and N206. LRR repeat units lie at residues 207–231 (LTSLSSLNVASNHFKSTLPSDMSGL), 233–255 (NLKYFDVRENSFVGTFPTSLFTI), 257–279 (SLQIVYLEGNQFMGPIKFGNISS), 280–304 (SSRLWDLNLADNKFDGPIPEYISEI), 305–328 (HSLIVLDLSHNNLVGPIPTSISKL), 329–352 (VNLQHLSLSNNTLEGEVPGCLWGL), 354–375 (TVTLSHNSFNSFGKSSSGALDG), 376–399 (ESMQELDLGSNSLGGPFPHWICKQ), 400–423 (RFLKYLDLSNNLFNGSIPPCLKNS), 425–447 (YWLKGLVLRNNSFSGFLPDVFVN), 448–472 (ASMLLSLDVSYNRLEGKLPKSLINC), 474–496 (GMELLNVGSNIIKDTFPSWLVSL), 497–524 (PSLRVLILRSNAFYGSLYYDHISFGFQH), and 526–546 (RLIDISQNGFSGTLSPLYFSN). N-linked (GlcNAc...) asparagine glycosylation occurs at N276. An N-linked (GlcNAc...) asparagine glycan is attached at N338. 5 N-linked (GlcNAc...) asparagine glycosylation sites follow: N413, N422, N434, N447, and N471. N558 carries N-linked (GlcNAc...) asparagine glycosylation. LRR repeat units lie at residues 596–621 (IPYFFRAIDFSGNRFFGNIPESVGLL), 622–645 (KELRLLNLSGNSFTSNIPQSLANL), 646–669 (TNLETLDLSRNQLSGHIPRDLGSL), and 671–694 (FLSTMNFSHNLLEGPVPLGTQFQS). N-linked (GlcNAc...) asparagine glycans are attached at residues N628 and N644. N-linked (GlcNAc...) asparagine glycosylation is present at N676. Residues 740–760 (IAAAIAYGPGVFCGLVIGHIF) traverse the membrane as a helical segment. Residues 761-786 (FTAHKHEWFMEKFHRNKRRVVTTSAR) lie on the Cytoplasmic side of the membrane.

It belongs to the RLP family.

Its subcellular location is the cell membrane. Functionally, receptor for microbe-associated molecular patterns (MAMPs) that induces a BAK1-dependent basal immune response to necrotrophic fungi (e.g. S.sclerotiorum) in the presence of MAMPs (e.g. flg22 and SCLEROTINIA CULTURE FILTRATE ELICITOR1 (SCFE1) from the necrotrophic fungal pathogen S.sclerotiorum). Functionality seems to depend on the presence of the receptor kinase SOBIR1 as an adapter protein. Required for full non-host resistance to bacterial pathogens (e.g. P.syringae pv phaseolicola). This is Receptor-like protein 30 from Arabidopsis thaliana (Mouse-ear cress).